The chain runs to 257 residues: MLILVSPAKTLDFDNPPGSENYSMPTLLDQSEQLIEVCRKLTPTDVATLMKVSDKIAGLNVARFSSWQKEFTPTNAKQAVFAFRGDVYTGLDADTLSPQSLDRAQQQLRILSGLYGLLKPLDLMQPYRLEMGTRLANERGTNLYQFWGDIITDELNQTTAEQGSEFIINLASNEYFKAVKPKKLNAGLITPVFKDCKNGQYKVISFFAKKARGMMVRYILDNNVDSLEALTKFDTAGYYYSEKDSTVNEPVFLREEQ.

It belongs to the UPF0246 family.

In Shewanella pealeana (strain ATCC 700345 / ANG-SQ1), this protein is UPF0246 protein Spea_1078.